A 193-amino-acid chain; its full sequence is Leucyl/phenylalanyl-tRNA--protein transferase (193 aa).

The protein belongs to the L/F-transferase family.

It is found in the cytoplasm. It carries out the reaction N-terminal L-lysyl-[protein] + L-leucyl-tRNA(Leu) = N-terminal L-leucyl-L-lysyl-[protein] + tRNA(Leu) + H(+). The catalysed reaction is N-terminal L-arginyl-[protein] + L-leucyl-tRNA(Leu) = N-terminal L-leucyl-L-arginyl-[protein] + tRNA(Leu) + H(+). It catalyses the reaction L-phenylalanyl-tRNA(Phe) + an N-terminal L-alpha-aminoacyl-[protein] = an N-terminal L-phenylalanyl-L-alpha-aminoacyl-[protein] + tRNA(Phe). Its function is as follows. Functions in the N-end rule pathway of protein degradation where it conjugates Leu, Phe and, less efficiently, Met from aminoacyl-tRNAs to the N-termini of proteins containing an N-terminal arginine or lysine. This chain is Leucyl/phenylalanyl-tRNA--protein transferase, found in Akkermansia muciniphila (strain ATCC BAA-835 / DSM 22959 / JCM 33894 / BCRC 81048 / CCUG 64013 / CIP 107961 / Muc).